The sequence spans 296 residues: Ribosomal protein L11 methyltransferase (296 aa).

Thr-151, Gly-172, Asp-194, and Asn-233 together coordinate S-adenosyl-L-methionine.

The protein belongs to the methyltransferase superfamily. PrmA family.

Its subcellular location is the cytoplasm. The catalysed reaction is L-lysyl-[protein] + 3 S-adenosyl-L-methionine = N(6),N(6),N(6)-trimethyl-L-lysyl-[protein] + 3 S-adenosyl-L-homocysteine + 3 H(+). Its function is as follows. Methylates ribosomal protein L11. This Dechloromonas aromatica (strain RCB) protein is Ribosomal protein L11 methyltransferase.